Reading from the N-terminus, the 264-residue chain is S-adenosylmethionine decarboxylase proenzyme (264 aa).

The Schiff-base intermediate with substrate; via pyruvic acid role is filled by serine 113. Residue serine 113 is modified to Pyruvic acid (Ser); by autocatalysis. Residue histidine 118 is the Proton acceptor; for processing activity of the active site. Residue cysteine 141 is the Proton donor; for catalytic activity of the active site.

Belongs to the prokaryotic AdoMetDC family. Type 2 subfamily. As to quaternary structure, heterooctamer of four alpha and four beta chains arranged as a tetramer of alpha/beta heterodimers. Pyruvate serves as cofactor. Post-translationally, is synthesized initially as an inactive proenzyme. Formation of the active enzyme involves a self-maturation process in which the active site pyruvoyl group is generated from an internal serine residue via an autocatalytic post-translational modification. Two non-identical subunits are generated from the proenzyme in this reaction, and the pyruvate is formed at the N-terminus of the alpha chain, which is derived from the carboxyl end of the proenzyme. The post-translation cleavage follows an unusual pathway, termed non-hydrolytic serinolysis, in which the side chain hydroxyl group of the serine supplies its oxygen atom to form the C-terminus of the beta chain, while the remainder of the serine residue undergoes an oxidative deamination to produce ammonia and the pyruvoyl group blocking the N-terminus of the alpha chain.

The enzyme catalyses S-adenosyl-L-methionine + H(+) = S-adenosyl 3-(methylsulfanyl)propylamine + CO2. It functions in the pathway amine and polyamine biosynthesis; S-adenosylmethioninamine biosynthesis; S-adenosylmethioninamine from S-adenosyl-L-methionine: step 1/1. Its function is as follows. Catalyzes the decarboxylation of S-adenosylmethionine to S-adenosylmethioninamine (dcAdoMet), the propylamine donor required for the synthesis of the polyamines spermine and spermidine from the diamine putrescine. This Xylella fastidiosa (strain Temecula1 / ATCC 700964) protein is S-adenosylmethionine decarboxylase proenzyme.